The chain runs to 241 residues: tRNA (guanine-N(1)-)-methyltransferase (241 aa).

S-adenosyl-L-methionine contacts are provided by residues glycine 108 and 127–132 (LGDYVL).

This sequence belongs to the RNA methyltransferase TrmD family. In terms of assembly, homodimer.

The protein resides in the cytoplasm. The catalysed reaction is guanosine(37) in tRNA + S-adenosyl-L-methionine = N(1)-methylguanosine(37) in tRNA + S-adenosyl-L-homocysteine + H(+). Specifically methylates guanosine-37 in various tRNAs. The chain is tRNA (guanine-N(1)-)-methyltransferase from Streptococcus suis (strain 98HAH33).